The primary structure comprises 238 residues: MSRNSRGSGRYVFVVLACVFGYTRAVHAEVYTDPSTSGHVTISIPIWAFVEPQPGVMTQQAESPRTPPPQTLRELGAFVLGGAVYGWRFSYTPKEKKRAVMEHFTLTPIFPLPPDSPQISLRHVRTPYPYIHCRAEYSLDARHATHMRQSRNLTYQRAQGRGRGERKEELKGVYHAYHRAIVDALRKTVRKTQKNKPKEVEGMLYVKDNPRLFVEAGEFVAELSLSVHFTKITPYSVY.

Residues 1–28 (MSRNSRGSGRYVFVVLACVFGYTRAVHA) form the signal peptide.

This is an uncharacterized protein from Treponema pallidum (strain Nichols).